The primary structure comprises 344 residues: uncharacterized protein (344 aa).

Residues 95–344 (TINPEDANED…TPAKKNSKGR (250 aa)) are disordered. Residues 103–123 (EDAKVKNSLKLEKEEGSDEKS) show a composition bias toward basic and acidic residues. The segment covering 135-155 (SDDESDNSNDSEESEAEDSDQ) has biased composition (acidic residues). The span at 191 to 200 (SAKNAKASKP) shows a compositional bias: low complexity. Positions 244-259 (SEDEDSGSDNSEEESE) are enriched in acidic residues. Over residues 265–276 (ASSKKPPSKSSK) the composition is skewed to basic residues. A compositionally biased stretch (acidic residues) spans 281–314 (EDEDEDSGQSESEHSEEESNSDEDSGQSEEESEE). The span at 331–344 (TAKKTPAKKNSKGR) shows a compositional bias: basic residues.

This is an uncharacterized protein from Acanthamoeba polyphaga (Amoeba).